The sequence spans 100 residues: Urease subunit gamma (100 aa).

This sequence belongs to the urease gamma subunit family. Heterotrimer of UreA (gamma), UreB (beta) and UreC (alpha) subunits. Three heterotrimers associate to form the active enzyme.

It localises to the cytoplasm. The enzyme catalyses urea + 2 H2O + H(+) = hydrogencarbonate + 2 NH4(+). The protein operates within nitrogen metabolism; urea degradation; CO(2) and NH(3) from urea (urease route): step 1/1. The chain is Urease subunit gamma from Polaromonas naphthalenivorans (strain CJ2).